An 869-amino-acid polypeptide reads, in one-letter code: Structure-specific endonuclease subunit SLX4 (869 aa).

The span at 40-59 (SPLSLPSPTSLLDFLSTSTS) shows a compositional bias: low complexity. Disordered regions lie at residues 40–79 (SPLSLPSPTSLLDFLSTSTSRGPARSDTDGDKTQGKEVLD), 92–116 (NRVVSGTGGKAATGKKLKRRTESPG), 165–199 (KANQTVSLQPETKKSAPKGCNDTTQPADNGHINDL), 293–323 (GLSDSRQSSITEDSESATSKPRRVKAKNPPK), 351–388 (TLLSDEPGKEKNVAKRTSGARCAKPGRKKSATTEKKNE), 418–437 (ANGHSEDRHEQNEGTSHISN), and 630–774 (KTSN…ASET). A compositionally biased stretch (basic and acidic residues) spans 63–79 (ARSDTDGDKTQGKEVLD). Polar residues-rich tracts occupy residues 165–174 (KANQTVSLQP) and 294–311 (LSDSRQSSITEDSESATS). The span at 312-322 (KPRRVKAKNPP) shows a compositional bias: basic residues. Composition is skewed to polar residues over residues 647 to 657 (VDESTQGQSLG) and 664 to 673 (SIPQTATTQV). The segment covering 688–700 (VPVPSRRSTSTSK) has biased composition (low complexity). Polar residues predominate over residues 765–774 (IPSTGTASET).

Belongs to the SLX4 family. In terms of assembly, forms a heterodimer with SLX1. Phosphorylated in response to DNA damage.

The protein resides in the nucleus. Regulatory subunit of the SLX1-SLX4 structure-specific endonuclease that resolves DNA secondary structures generated during DNA repair and recombination. Has endonuclease activity towards branched DNA substrates, introducing single-strand cuts in duplex DNA close to junctions with ss-DNA. The chain is Structure-specific endonuclease subunit SLX4 from Paracoccidioides brasiliensis (strain Pb18).